Here is a 584-residue protein sequence, read N- to C-terminus: DNA ligase (584 aa).

Glu249 contributes to the ATP binding site. The N6-AMP-lysine intermediate role is filled by Lys251. Residues Arg256, Arg271, Glu301, Phe341, Arg416, and Lys422 each coordinate ATP.

This sequence belongs to the ATP-dependent DNA ligase family. Requires Mg(2+) as cofactor.

It catalyses the reaction ATP + (deoxyribonucleotide)n-3'-hydroxyl + 5'-phospho-(deoxyribonucleotide)m = (deoxyribonucleotide)n+m + AMP + diphosphate.. In terms of biological role, DNA ligase that seals nicks in double-stranded DNA during DNA replication, DNA recombination and DNA repair. The sequence is that of DNA ligase from Pyrobaculum arsenaticum (strain DSM 13514 / JCM 11321 / PZ6).